Here is a 613-residue protein sequence, read N- to C-terminus: Arginine--tRNA ligase (613 aa).

Residues 123–133 (PNVAKPMHVGH) carry the 'HIGH' region motif.

It belongs to the class-I aminoacyl-tRNA synthetase family. Monomer.

The protein localises to the cytoplasm. The catalysed reaction is tRNA(Arg) + L-arginine + ATP = L-arginyl-tRNA(Arg) + AMP + diphosphate. The sequence is that of Arginine--tRNA ligase from Caulobacter sp. (strain K31).